The sequence spans 325 residues: Collagen alpha-1(IX) chain (325 aa).

Low complexity predominate over residues 1–54; that stretch reads PGQLGNSGKPGQQGPPGEVGPRGPRGLPGSRGPVGPEGSPGIPGKLGPLGSPGL. Disordered regions lie at residues 1–163 and 187–325; these read PGQL…APTD and RPDT…GPDK. Over residues 198–208 the composition is skewed to pro residues; the sequence is RPGPPGPPGPP. The span at 237 to 249 shows a compositional bias: basic and acidic residues; that stretch reads PKGDLGEKGERGP. Residues 292 to 304 show a composition bias toward pro residues; that stretch reads VPGPPGPPGPPGF.

This sequence belongs to the fibril-associated collagens with interrupted helices (FACIT) family. Heterotrimer of an alpha 1(IX), an alpha 2(IX) and an alpha 3(IX) chain. In terms of processing, covalently linked to the telopeptides of type II collagen by lysine-derived cross-links. Post-translationally, prolines at the third position of the tripeptide repeating unit (G-X-Y) are hydroxylated in some or all of the chains.

It localises to the secreted. Its subcellular location is the extracellular space. It is found in the extracellular matrix. Its function is as follows. Structural component of hyaline cartilage and vitreous of the eye. The sequence is that of Collagen alpha-1(IX) chain (Col9a1) from Rattus norvegicus (Rat).